A 154-amino-acid chain; its full sequence is Urease subunit alpha (154 aa).

The 117-residue stretch at 38–154 folds into the Urease domain; that stretch reads GGIDTHIHFI…ADEMDIQVAI (117 aa). Histidine 43, histidine 45, and lysine 126 together coordinate Ni(2+). Lysine 126 bears the N6-carboxylysine mark. Residue histidine 128 participates in substrate binding.

Belongs to the metallo-dependent hydrolases superfamily. Urease alpha subunit family. As to quaternary structure, heterotrimer of UreA (gamma), UreB (beta) and UreC (alpha) subunits. Three heterotrimers associate to form the active enzyme. Ni cation serves as cofactor. In terms of processing, carboxylation allows a single lysine to coordinate two nickel ions.

The protein localises to the cytoplasm. It carries out the reaction urea + 2 H2O + H(+) = hydrogencarbonate + 2 NH4(+). It functions in the pathway nitrogen metabolism; urea degradation; CO(2) and NH(3) from urea (urease route): step 1/1. This Photobacterium damselae subsp. damselae (Listonella damsela) protein is Urease subunit alpha (ureC).